Consider the following 329-residue polypeptide: Endochitinase A (329 aa).

An N-terminal signal peptide occupies residues 1–23; the sequence is MRLCKFTALSSLLFSLLLLSASA. Residues 24-65 form the Chitin-binding type-1 domain; sequence EQCGSQAGGARCPSGLCCSKFGWCGNTNDYCGPGNCQSQCPG. Intrachain disulfides connect Cys-26–Cys-41, Cys-35–Cys-47, Cys-40–Cys-54, and Cys-59–Cys-63. A 4-hydroxyproline; partial modification is found at Pro-67. Pro-69, Pro-71, Pro-72, and Pro-74 each carry 4-hydroxyproline. Pro-75 is modified (4-hydroxyproline; partial). 3 disulfide bridges follow: Cys-101/Cys-163, Cys-175/Cys-183, and Cys-282/Cys-314. Glu-145 (proton donor) is an active-site residue. A propeptide spans 323–329 (removed in mature form); the sequence is GLLVDTM.

The protein belongs to the glycosyl hydrolase 19 family. Chitinase class I subfamily. Post-translationally, the 4-hydroxyproline residues are not glycosylated in this plant vacuolar protein.

Its subcellular location is the vacuole. It carries out the reaction Random endo-hydrolysis of N-acetyl-beta-D-glucosaminide (1-&gt;4)-beta-linkages in chitin and chitodextrins.. Functionally, defense against chitin-containing fungal pathogens. In Nicotiana tabacum (Common tobacco), this protein is Endochitinase A (CHN48).